The chain runs to 337 residues: Cytoskeleton protein RodZ (337 aa).

Topologically, residues 1–111 (MNTEATHDQN…LGKRRKKRDG (111 aa)) are cytoplasmic. The region spanning 19–71 (LRNAREQLGLSQQAVAERLCLKVSTVRDIEEDKAPADLASTFLRGYIRSYARL) is the HTH cro/C1-type domain. The segment at residues 30–49 (QQAVAERLCLKVSTVRDIEE) is a DNA-binding region (H-T-H motif). A helical; Signal-anchor for type II membrane protein transmembrane segment spans residues 112 to 132 (WLMTFTWLVLFVVIGLSGAWW). The Periplasmic portion of the chain corresponds to 133–337 (WQDHKAQQEE…TLNAEQSPAQ (205 aa)). Residues 145 to 167 (TMADQSSAELSSNSEQGQSVPLN) are compositionally biased toward polar residues. Residues 145–220 (TMADQSSAEL…VSPSQANVDT (76 aa)) are disordered. Residues 168 to 207 (TSTTTDPATTSTPPASVDTTATNTQTPAVTAPAPAVDPQQ) show a composition bias toward low complexity. The segment covering 208–218 (NAVVSPSQANV) has biased composition (polar residues).

Belongs to the RodZ family.

It is found in the cell inner membrane. Its function is as follows. Cytoskeletal protein that is involved in cell-shape control through regulation of the length of the long axis. The sequence is that of Cytoskeleton protein RodZ from Escherichia coli O17:K52:H18 (strain UMN026 / ExPEC).